Consider the following 281-residue polypeptide: NAD-dependent protein deacetylase 1 (281 aa).

In terms of domain architecture, Deacetylase sirtuin-type spans 1-281 (MEEGAALEGV…FDQILDALDL (281 aa)). NAD(+)-binding positions include 24–44 (GAGVSTDSGIPDYRSPRGSLN) and 102–105 (QNVD). His120 acts as the Proton acceptor in catalysis. Positions 128, 131, 183, and 186 each coordinate Zn(2+). NAD(+)-binding positions include 224-226 (GSS), 250-252 (NGG), and Val268.

This sequence belongs to the sirtuin family. Class II subfamily. Zn(2+) is required as a cofactor.

The protein resides in the cytoplasm. The enzyme catalyses N(6)-acetyl-L-lysyl-[protein] + NAD(+) + H2O = 2''-O-acetyl-ADP-D-ribose + nicotinamide + L-lysyl-[protein]. Functionally, NAD-dependent protein deacetylase which modulates the activities of several enzymes which are inactive in their acetylated form. The chain is NAD-dependent protein deacetylase 1 from Corynebacterium efficiens (strain DSM 44549 / YS-314 / AJ 12310 / JCM 11189 / NBRC 100395).